The chain runs to 518 residues: Reduced folate transporter (518 aa).

N-acetylmethionine is present on M1. The Cytoplasmic portion of the chain corresponds to 1-29 (MVPTGQVAEKQACEEPRQDRELKSWRCLV). Residues 30-50 (FYLCFFGFMAQLRPGESFITP) form a helical membrane-spanning segment. I48 and T49 together coordinate folate. The Extracellular portion of the chain corresponds to 51–62 (YLLQQNFTIEQV). An N-linked (GlcNAc...) asparagine glycan is attached at N56. A helical transmembrane segment spans residues 63-85 (TNEIIPVLPYSHLAVLVPIFLLT). Residues 86 to 89 (DYLR) lie on the Cytoplasmic side of the membrane. A helical membrane pass occupies residues 90-110 (YKPILILQCLSFMCVWLLLLL). Topologically, residues 111-114 (GTSV) are extracellular. A helical transmembrane segment spans residues 115–137 (VHMQLMEVFYSVTMAARIAYSSY). Residues E121 and R131 each coordinate folate. The Cytoplasmic portion of the chain corresponds to 138–151 (IFSLVRPSRYQRMA). The chain crosses the membrane as a helical span at residues 152–176 (SYSRAAVLLGVFTSSVLGQVLWPLE). V162 lines the folate pocket. The Extracellular portion of the chain corresponds to 177-181 (QKSQN). Residues 182 to 200 (SNMLNYISLGFIIFSLGLS) traverse the membrane as a helical segment. At 201-266 (LFLKRPKHSL…LSELVGNLRQ (66 aa)) the chain is on the cytoplasmic side. Residues 267-292 (PQLRLWCLWWVFNSAGYYLIVYYVHV) traverse the membrane as a helical segment. Folate contacts are provided by A281, G282, and I286. Residues 293–300 (LWSIDKNL) are Extracellular-facing. A helical membrane pass occupies residues 301-323 (NYNGAVDAASTLLSAITSFSAGF). Over 324 to 329 (VKIRWA) the chain is Cytoplasmic. A helical membrane pass occupies residues 330-350 (LWSKLVIASVIAIQAGLVFCM). The Extracellular portion of the chain corresponds to 351–353 (YMV). A helical membrane pass occupies residues 354–377 (HYVTWVHKIWVLYMTYVLFRGAYQ). Positions 366 and 370 each coordinate folate. The Cytoplasmic segment spans residues 378–391 (FLVPIATFQIASSL). The helical transmembrane segment at 392 to 415 (SKELCALVFGINTFLATALKTAIT) threads the bilayer. The required for substrate-binding stretch occupies residues 407–419 (ATALKTAITLVVS). Residues 416–423 (LVVSDKRG) lie on the Extracellular side of the membrane. Residues 424 to 448 (LGLKVEKQFCIYSVYFMVLSVICFV) traverse the membrane as a helical segment. The Cytoplasmic portion of the chain corresponds to 449-512 (GAVLDGVRYC…DGVEDSEASL (64 aa)). A phosphoserine mark is found at S473, S478, and S483. The segment at 480-518 (QVPSMQDGGLGGLQPSAPQLLPEDGVEDSEASLRAEAKA) is disordered.

Belongs to the reduced folate carrier (RFC) transporter (TC 2.A.48) family.

The protein resides in the cell membrane. The protein localises to the apical cell membrane. It localises to the basolateral cell membrane. The enzyme catalyses 5-amino-1-(5-phospho-beta-D-ribosyl)imidazole-4-carboxamide(in) + (6S)-5-methyl-5,6,7,8-tetrahydrofolate(out) = 5-amino-1-(5-phospho-beta-D-ribosyl)imidazole-4-carboxamide(out) + (6S)-5-methyl-5,6,7,8-tetrahydrofolate(in). In terms of biological role, antiporter that mediates the import of reduced folates, driven by the export of organic anions. Also acts as an importer of immunoreactive cyclic dinucleotides, but with a lower transporter activity. Mechanistically, acts as a secondary active transporter, which exports intracellular organic anions down their concentration gradients to facilitate the uptake of its substrates. Has high affinity for N5-methyltetrahydrofolate, the predominant circulating form of folate. Also mediates the import of antifolate drug methotrexate. 5-amino-4-imidazolecarboxamide riboside (AICAR), when phosphorylated to AICAR monophosphate, can serve as an organic anion for antiporter activity. The sequence is that of Reduced folate transporter from Cricetulus griseus (Chinese hamster).